Reading from the N-terminus, the 298-residue chain is MKVLWAALVVTLLAGCRADVEPEVEVREPAVWQSGQPWELALSRFWDYLRWVQTLSDQVQEELLSNQVTQELTLLIEDTMKEVKDYKAELEKELGPVAEDTKARLAKELQAAQARLGADMEEVRNRLSQYRSEVQAMLGQSSEELRARLTSHLRKMRKRLQRDIDELQKRMAVYKAGAQEGAERGVSAIRERLGSLIEQGRLQALTSQPLQERAQAWGEQMRGRLEKVGSQARDRLEEVREQMEEVRVKVEEQAEAFQARLKSWFEPMMEDMRRQWAELIQKVQVAVGASTSAPSQEP.

A signal peptide spans Met-1–Ala-18. Tandem repeats lie at residues Leu-74–Leu-94, Gly-95–Leu-116, Gly-117–Leu-138, Gly-139–Leu-160, Gln-161–Ala-182, Glu-183–Gln-203, Ala-204–Met-221, and Arg-222–Met-243. The interval Gly-95–Met-243 is 8 X 22 AA approximate tandem repeats. A Methionine sulfoxide modification is found at Met-137. Phosphoserine is present on Ser-141. Residues Ser-151 to Gln-161 form an LDL and other lipoprotein receptors binding region. A heparin-binding site is contributed by Lys-155–Lys-158. Positions Gln-203–Asp-271 are lipid-binding and lipoprotein association. Trp-217–Arg-224 provides a ligand contact to heparin. The specificity for association with VLDL stretch occupies residues Ala-259–Asp-271.

It belongs to the apolipoprotein A1/A4/E family. In terms of assembly, homotetramer. May interact with ABCA1; functionally associated with ABCA1 in the biogenesis of HDLs. May interact with APP/A4 amyloid-beta peptide; the interaction is extremely stable in vitro but its physiological significance is unclear. May interact with MAPT. May interact with MAP2. In the cerebrospinal fluid, interacts with secreted SORL1. Interacts with PMEL; this allows the loading of PMEL luminal fragment on ILVs to induce fibril nucleation. APOE exists as multiple glycosylated and sialylated glycoforms within cells and in plasma. The extent of glycosylation and sialylation are tissue and context specific. Post-translationally, glycated in plasma VLDL. In terms of processing, phosphorylated by FAM20C in the extracellular medium.

It localises to the secreted. The protein resides in the extracellular space. The protein localises to the extracellular matrix. It is found in the extracellular vesicle. Its subcellular location is the endosome. It localises to the multivesicular body. Functionally, APOE is an apolipoprotein, a protein associating with lipid particles, that mainly functions in lipoprotein-mediated lipid transport between organs via the plasma and interstitial fluids. APOE is a core component of plasma lipoproteins and is involved in their production, conversion and clearance. Apolipoproteins are amphipathic molecules that interact both with lipids of the lipoprotein particle core and the aqueous environment of the plasma. As such, APOE associates with chylomicrons, chylomicron remnants, very low density lipoproteins (VLDL) and intermediate density lipoproteins (IDL) but shows a preferential binding to high-density lipoproteins (HDL). It also binds a wide range of cellular receptors including the LDL receptor/LDLR, the LDL receptor-related proteins LRP1, LRP2 and LRP8 and the very low-density lipoprotein receptor/VLDLR that mediate the cellular uptake of the APOE-containing lipoprotein particles. Finally, APOE also has a heparin-binding activity and binds heparan-sulfate proteoglycans on the surface of cells, a property that supports the capture and the receptor-mediated uptake of APOE-containing lipoproteins by cells. A main function of APOE is to mediate lipoprotein clearance through the uptake of chylomicrons, VLDLs, and HDLs by hepatocytes. APOE is also involved in the biosynthesis by the liver of VLDLs as well as their uptake by peripheral tissues ensuring the delivery of triglycerides and energy storage in muscle, heart and adipose tissues. By participating in the lipoprotein-mediated distribution of lipids among tissues, APOE plays a critical role in plasma and tissues lipid homeostasis. APOE is also involved in two steps of reverse cholesterol transport, the HDLs-mediated transport of cholesterol from peripheral tissues to the liver, and thereby plays an important role in cholesterol homeostasis. First, it is functionally associated with ABCA1 in the biogenesis of HDLs in tissues. Second, it is enriched in circulating HDLs and mediates their uptake by hepatocytes. APOE also plays an important role in lipid transport in the central nervous system, regulating neuron survival and sprouting. The polypeptide is Apolipoprotein E (APOE) (Cavia tschudii (Montane guinea pig)).